The chain runs to 484 residues: Probable receptor-like protein kinase At5g18500 (484 aa).

A helical membrane pass occupies residues isoleucine 21–threonine 41. Positions arginine 72–alanine 135 are disordered. A compositionally biased stretch (basic and acidic residues) spans lysine 91 to serine 105. Polar residues predominate over residues serine 125–threonine 134. Position 155 is a phosphothreonine (threonine 155). Positions phenylalanine 166 to alanine 445 constitute a Protein kinase domain. ATP is bound by residues isoleucine 172–valine 180 and lysine 194. Tyrosine 239 carries the post-translational modification Phosphotyrosine. Aspartate 292 (proton acceptor) is an active-site residue. Serine 296 carries the post-translational modification Phosphoserine. A phosphothreonine mark is found at threonine 326 and threonine 331. Position 339 is a phosphotyrosine (tyrosine 339). The segment at glutamate 425 to glycine 484 is disordered. The span at arginine 460 to glycine 484 shows a compositional bias: basic and acidic residues.

This sequence belongs to the protein kinase superfamily. Ser/Thr protein kinase family.

It is found in the cell membrane. The enzyme catalyses L-seryl-[protein] + ATP = O-phospho-L-seryl-[protein] + ADP + H(+). The catalysed reaction is L-threonyl-[protein] + ATP = O-phospho-L-threonyl-[protein] + ADP + H(+). This Arabidopsis thaliana (Mouse-ear cress) protein is Probable receptor-like protein kinase At5g18500.